Here is a 129-residue protein sequence, read N- to C-terminus: Transcription antitermination protein NusB (129 aa).

The protein belongs to the NusB family.

Its function is as follows. Involved in transcription antitermination. Required for transcription of ribosomal RNA (rRNA) genes. Binds specifically to the boxA antiterminator sequence of the ribosomal RNA (rrn) operons. The chain is Transcription antitermination protein NusB from Staphylococcus aureus (strain USA300 / TCH1516).